A 165-amino-acid polypeptide reads, in one-letter code: uncharacterized protein (165 aa).

This is an uncharacterized protein from Saccharomyces cerevisiae (strain ATCC 204508 / S288c) (Baker's yeast).